A 388-amino-acid polypeptide reads, in one-letter code: Beta-hexosaminidase LpqI (388 aa).

An N-terminal signal peptide occupies residues 1–19 (MAFPRTLAILAAAAALVVA). Cys20 is lipidated: N-palmitoyl cysteine. Cys20 carries S-diacylglycerol cysteine lipidation. Substrate is bound by residues Asp123, Arg131, Arg193, and 223-224 (KH). His236 acts as the Proton donor/acceptor in catalysis. The Nucleophile role is filled by Asp311.

The protein belongs to the glycosyl hydrolase 3 family.

Its subcellular location is the cell inner membrane. The catalysed reaction is Hydrolysis of terminal non-reducing N-acetyl-D-hexosamine residues in N-acetyl-beta-D-hexosaminides.. It participates in cell wall biogenesis; peptidoglycan recycling. Its function is as follows. Plays a role in peptidoglycan recycling by cleaving the terminal beta-1,4-linked N-acetylglucosamine (GlcNAc) from peptidoglycan fragments. Acts as a regulator for GlcNAc-MurNAc levels by cleaving disaccharides and allowing the breakdown of MurNAc. The polypeptide is Beta-hexosaminidase LpqI (Mycobacterium bovis (strain BCG / Pasteur 1173P2)).